A 251-amino-acid chain; its full sequence is Small ribosomal subunit protein uS2 (251 aa).

Ser-2 is modified (N-acetylserine). Residues 213–251 (QVAEEATAAADEDVKEEVAEEQTEAADWAEGNTEEVASW) form a disordered region. A compositionally biased stretch (acidic residues) spans 222-236 (ADEDVKEEVAEEQTE).

Belongs to the universal ribosomal protein uS2 family. In terms of assembly, component of the small ribosomal subunit. Mature ribosomes consist of a small (40S) and a large (60S) subunit. The 40S subunit contains about 33 different proteins and 1 molecule of RNA (18S). The 60S subunit contains about 49 different proteins and 3 molecules of RNA (25S, 5.8S and 5S). Interacts with RPS21.

It is found in the cytoplasm. Functionally, required for the assembly and/or stability of the 40S ribosomal subunit. Required for the processing of the 20S rRNA-precursor to mature 18S rRNA in a late step of the maturation of 40S ribosomal subunits. This Lachancea thermotolerans (strain ATCC 56472 / CBS 6340 / NRRL Y-8284) (Yeast) protein is Small ribosomal subunit protein uS2.